The following is a 496-amino-acid chain: Angiopoietin-2 (496 aa).

A signal peptide spans 1–18; the sequence is MWQIVFFTLSCDLVLAAA. N-linked (GlcNAc...) asparagine glycans are attached at residues N89, N119, N133, N151, N240, and N304. A coiled-coil region spans residues 166-248; the sequence is STNKLEKQIL…VNNSVLQKQQ (83 aa). Residues 275 to 495 enclose the Fibrinogen C-terminal domain; the sequence is KEEQISFRDC…ATTMMIRPAD (221 aa). C284 and C313 are joined by a disulfide. Residues D429, D431, C433, and C435 each coordinate Ca(2+). Cystine bridges form between C433–C435 and C437–C450.

Interacts with TEK/TIE2, competing for the same binding site as ANGPT1. Interacts with ITGA5. Interacts with SVEP1/polydom. Interacts with THBD; this interaction significantly inhibits the generation of activated PC and TAFIa/CPB2 by the thrombin/thrombomodulin complex.

The protein localises to the secreted. Its function is as follows. Binds to TEK/TIE2, competing for the ANGPT1 binding site, and modulating ANGPT1 signaling. Can induce tyrosine phosphorylation of TEK/TIE2 in the absence of ANGPT1. In the absence of angiogenic inducers, such as VEGF, ANGPT2-mediated loosening of cell-matrix contacts may induce endothelial cell apoptosis with consequent vascular regression. In concert with VEGF, it may facilitate endothelial cell migration and proliferation, thus serving as a permissive angiogenic signal. Involved in the regulation of lymphangiogenesis. This Homo sapiens (Human) protein is Angiopoietin-2 (ANGPT2).